We begin with the raw amino-acid sequence, 399 residues long: 3-phosphoshikimate 1-carboxyvinyltransferase (399 aa).

Residues Lys19, Ser20, and Arg24 each contribute to the 3-phosphoshikimate site. Lys19 serves as a coordination point for phosphoenolpyruvate. Gly83 and Arg111 together coordinate phosphoenolpyruvate. The 3-phosphoshikimate site is built by Ser152, Ser153, Gln154, Asp288, Gln310, and Lys314. Gln154 lines the phosphoenolpyruvate pocket. The active-site Proton acceptor is the Asp288. The phosphoenolpyruvate site is built by Arg318, Arg359, and Lys385.

It belongs to the EPSP synthase family. In terms of assembly, monomer.

The protein localises to the cytoplasm. It carries out the reaction 3-phosphoshikimate + phosphoenolpyruvate = 5-O-(1-carboxyvinyl)-3-phosphoshikimate + phosphate. It participates in metabolic intermediate biosynthesis; chorismate biosynthesis. Its function is as follows. Catalyzes the transfer of the enolpyruvyl moiety of phosphoenolpyruvate (PEP) to the 5-hydroxyl of shikimate-3-phosphate (S3P) to produce enolpyruvyl shikimate-3-phosphate and inorganic phosphate. This is 3-phosphoshikimate 1-carboxyvinyltransferase from Thermococcus kodakarensis (strain ATCC BAA-918 / JCM 12380 / KOD1) (Pyrococcus kodakaraensis (strain KOD1)).